We begin with the raw amino-acid sequence, 299 residues long: NAD kinase (299 aa).

The Proton acceptor role is filled by aspartate 71. Residues 71–72, 145–146, arginine 173, aspartate 175, 186–191, alanine 210, and glutamine 248 contribute to the NAD(+) site; these read DG, ND, and TAYSLS.

The protein belongs to the NAD kinase family. Requires a divalent metal cation as cofactor.

Its subcellular location is the cytoplasm. It catalyses the reaction NAD(+) + ATP = ADP + NADP(+) + H(+). Involved in the regulation of the intracellular balance of NAD and NADP, and is a key enzyme in the biosynthesis of NADP. Catalyzes specifically the phosphorylation on 2'-hydroxyl of the adenosine moiety of NAD to yield NADP. The protein is NAD kinase of Bordetella pertussis (strain Tohama I / ATCC BAA-589 / NCTC 13251).